Reading from the N-terminus, the 468-residue chain is MQLSGILSWLLSWLWASQTTLDLQGLYGPSLSPNAEIVLASDANYTHVTTQRWTVHGAPHYLGAIIPVTEHDIQHIIKISREHAINFLVVGAGHGATVTFERFRHGIAIDLQQFKDVHLDVDAERLTVAGATVFSDIIDPLYSAQREIVTPSAPCVGVVGMTLGGGIGSLQGLHGLLLDSLESVRLVTPIGDLIEVSETQYPELFWGLRGAGSNFGVVTSATYRTHQATHGGLVTNVDIFAATEHASIWQALSAFDDTLPPELALTLAVAYNRTIDQPLVLVNAIYYGPEEQALELLSPFTSLTPIMSRSVTVPWNALLDTTFFGLAAQEGGACAKNQAVNIYSIGLNHTDVPAWESYMEQLLQFYRQNPTYDGRFLVQRYPTQGALSTLDSNTAYPHRQIKMHINLEGWYTDPYLEDPVNAFLKQSRRHFQQSSGFDNLAVYVNYAHGDEGPDVWYTAEKLENLTRL.

The signal sequence occupies residues 1–16 (MQLSGILSWLLSWLWA). Asparagine 44 is a glycosylation site (N-linked (GlcNAc...) asparagine). In terms of domain architecture, FAD-binding PCMH-type spans 54–228 (TVHGAPHYLG…TSATYRTHQA (175 aa)). N-linked (GlcNAc...) asparagine glycosylation is found at asparagine 272, asparagine 348, and asparagine 464.

The protein belongs to the oxygen-dependent FAD-linked oxidoreductase family. It depends on FAD as a cofactor.

The protein operates within secondary metabolite biosynthesis. In terms of biological role, FAD-linked oxidoreductase; part of the gene cluster that mediates the biosynthesis of azaphilones, a class of fungal metabolites characterized by a highly oxygenated pyrano-quinone bicyclic core and exhibiting a broad range of bioactivities. In the first step, the non-reducing polyketide synthase azaA forms the hexaketide precursor from successive condensations of five malonyl-CoA units, presumably with a simple acetyl-CoA starter unit. The reactive polyketide chain then undergoes a PT-mediated C2-C7 cyclization to afford the aromatic ring and is eventually released as an aldehyde through the R-domain. The putative ketoreductase azaE is proposed to catalyze the reduction of the terminal ketone resulting in the early culture product FK17-P2a. The monooxygenase azaH was demonstrated to be the only enzyme required to convert FK17-P2a to azanigerone E. AzaH first hydroxylates the benzaldehyde intermediate FK17-P2a at C4, which triggers the formation of the pyran-ring to afford azanigerone E. In parallel, the 2,4-dimethylhexanoyl chain is synthesized by the HR-PKS azaB and is proposed to be transferred to the C4-hydroxyl of azanigerone E by the acyltransferase azaD directly from the ACP domain of azaB. Alternatively, the 2,4-dimethyl-hexanoyl chain may be offloaded from the HR-PKS as a carboxylic acid and converted to an acyl-CoA by azaF. The resulting acyl-CoA molecule could then be taken up as a substrate by AzaD to form azanigerone B. To yield the carboxylic acid substituent in azanigerone A, the hydroxypropyl side chain of azanigerone B would need to undergo a C-C oxidative cleavage catalyzed by cytochrome P450 AzaI. AzaI is proposed to act on a vicinal diol that leads to a C-C bond scission either through an alkoxyradical intermediate or a peroxy complex. In the biosynthesis of azanigerone A, azanigerone B first undergoes hydroxylation at C10, possibly catalyzed by one of the two FAD-dependent monooxygenases encoded in the cluster, azaG or azaL, resulting in the vicinal diol azanigerone C. Oxidative cleavage of azanigerone C by azaI would yield the corresponding aldehyde derivative of azanigerone A. Finally, the dehydrogenase azaJ is proposed to convert the aldehyde functional group into the carboxylic acid, completing the conversion from azanigerone B to azanigerone A. Alternatively, the oxidation of aldehyde to carboxylic acid may be catalyzed by the same P450 enzyme azaI via consecutive oxidation or by endogenous alcohol dehydrogenase. This is FAD-linked oxidoreductase azaG from Aspergillus niger (strain ATCC 1015 / CBS 113.46 / FGSC A1144 / LSHB Ac4 / NCTC 3858a / NRRL 328 / USDA 3528.7).